We begin with the raw amino-acid sequence, 147 residues long: UPF0735 ACT domain-containing protein GTNG_2535 (147 aa).

Residues 69–144 form the ACT domain; sequence TLFFHLEDRS…FVEKVEIVGS (76 aa).

It belongs to the UPF0735 family.

This is UPF0735 ACT domain-containing protein GTNG_2535 from Geobacillus thermodenitrificans (strain NG80-2).